A 354-amino-acid polypeptide reads, in one-letter code: MNDSAHIDYARYDHIRPLLWTGDALELLDQRKLPFEVAHVRCDSSDAVAEAIHSLAVRGAPAIGIAAGWGVVLAARDIAADDGSAALQKLEPALLRLNAARPTAVNLAWALMRMRRVLGAAGADWREVIAREAQAIADEDLAANRHMGALGAALIAPGSGVLTHCNTGSLATAGFGTALGVIRAGMAQQRIAKVFAGETRPWLQGARLTVWELQQDGIDATLIADSAASHLMKSGLVQWVIVGADRICANGDTANKIGTYQLAIAARHHGVKFMVVAPSSTVDMATASGDQIEIEQRDPGELFGVGGVRTVADGIHAWNPVFDVTPGDLIDAIVTERGVIAQPDLARMQAAFGA.

Residues 58 to 60 (RGA), R101, and Q204 each bind substrate. Catalysis depends on D245, which acts as the Proton donor. Position 255 to 256 (255 to 256 (NK)) interacts with substrate.

The protein belongs to the eIF-2B alpha/beta/delta subunits family. MtnA subfamily.

The enzyme catalyses 5-(methylsulfanyl)-alpha-D-ribose 1-phosphate = 5-(methylsulfanyl)-D-ribulose 1-phosphate. It functions in the pathway amino-acid biosynthesis; L-methionine biosynthesis via salvage pathway; L-methionine from S-methyl-5-thio-alpha-D-ribose 1-phosphate: step 1/6. Functionally, catalyzes the interconversion of methylthioribose-1-phosphate (MTR-1-P) into methylthioribulose-1-phosphate (MTRu-1-P). The chain is Methylthioribose-1-phosphate isomerase from Xanthomonas euvesicatoria pv. vesicatoria (strain 85-10) (Xanthomonas campestris pv. vesicatoria).